Consider the following 201-residue polypeptide: Large ribosomal subunit protein uL4 (201 aa).

Residues 44–71 (RAQKTRAEVSGSGKKPWRQKGTGRARSG) are disordered.

This sequence belongs to the universal ribosomal protein uL4 family. As to quaternary structure, part of the 50S ribosomal subunit.

In terms of biological role, one of the primary rRNA binding proteins, this protein initially binds near the 5'-end of the 23S rRNA. It is important during the early stages of 50S assembly. It makes multiple contacts with different domains of the 23S rRNA in the assembled 50S subunit and ribosome. Forms part of the polypeptide exit tunnel. The polypeptide is Large ribosomal subunit protein uL4 (Proteus mirabilis (strain HI4320)).